Consider the following 162-residue polypeptide: MPDTTNPIGFTDANELREKNRATVEKYMNTKGQDRLRRHELFVEDGCGGLWTTDTGSPIVIRGKDKLAEHAVWSLKCFPDWEWYNINIFGTDDPNHFWVECDGHGKILFPGYPEGYYENHFLHSFELEDGKIKRNREFMNVFQQLRALSIPVPQIKREGIPT.

The protein belongs to the PhzA/PhzB family. As to quaternary structure, homodimer.

Its pathway is antibiotic biosynthesis; phenazine biosynthesis. Functionally, involved in the biosynthesis of the antibiotic phenazine, a nitrogen-containing heterocyclic molecule. PhzB1 (operon phzA1B1C1E1F1G1) has a role in the biosynthesis of the phenazine during planktonic growth. The sequence is that of Phenazine biosynthesis protein PhzB1 from Pseudomonas aeruginosa (strain ATCC 15692 / DSM 22644 / CIP 104116 / JCM 14847 / LMG 12228 / 1C / PRS 101 / PAO1).